The primary structure comprises 431 residues: Enolase (431 aa).

Q167 provides a ligand contact to (2R)-2-phosphoglycerate. E209 (proton donor) is an active-site residue. Mg(2+) is bound by residues D246, E289, and D316. Residues K341, R370, S371, and K392 each coordinate (2R)-2-phosphoglycerate. Catalysis depends on K341, which acts as the Proton acceptor.

This sequence belongs to the enolase family. As to quaternary structure, component of the RNA degradosome, a multiprotein complex involved in RNA processing and mRNA degradation. It depends on Mg(2+) as a cofactor.

It localises to the cytoplasm. Its subcellular location is the secreted. The protein localises to the cell surface. The enzyme catalyses (2R)-2-phosphoglycerate = phosphoenolpyruvate + H2O. It functions in the pathway carbohydrate degradation; glycolysis; pyruvate from D-glyceraldehyde 3-phosphate: step 4/5. In terms of biological role, catalyzes the reversible conversion of 2-phosphoglycerate (2-PG) into phosphoenolpyruvate (PEP). It is essential for the degradation of carbohydrates via glycolysis. The sequence is that of Enolase from Marinobacter nauticus (strain ATCC 700491 / DSM 11845 / VT8) (Marinobacter aquaeolei).